The chain runs to 545 residues: Degenerin-like protein asic-2 (545 aa).

The Cytoplasmic segment spans residues 1–34 (MRGGGFVQIFKDFSNWSTVAVVPHVANANNKISR). A helical transmembrane segment spans residues 35-55 (IFWIAIFLFVLGMFAYELYIL). Over 56-457 (IAKFFSYPAT…NVINDLGGQA (402 aa)) the chain is Extracellular. The cysteines at positions 83 and 191 are disulfide-linked. Asn-201 is a glycosylation site (N-linked (GlcNAc...) asparagine). 5 disulfide bridges follow: Cys-284-Cys-370, Cys-305-Cys-366, Cys-309-Cys-364, Cys-318-Cys-343, and Cys-320-Cys-334. N-linked (GlcNAc...) asparagine glycosylation is present at Asn-350. A helical membrane pass occupies residues 458 to 478 (GLWLGLSVISVVEMTGLMLVM). A GAS motif; ion selectivity filter motif is present at residues 462 to 464 (GLS). Residues 479-545 (GAFCVTGGAI…NKGDEEKKKK (67 aa)) lie on the Cytoplasmic side of the membrane. Composition is skewed to basic and acidic residues over residues 514–523 (DHLEKKHGEM) and 534–545 (IENKGDEEKKKK). Residues 514–545 (DHLEKKHGEMESGSDGEVDDIENKGDEEKKKK) are disordered.

It belongs to the amiloride-sensitive sodium channel (TC 1.A.6) family. In terms of assembly, can form homotrimers. Heterotrimer; forms functional heterotrimers producing channel with different properties.

Its subcellular location is the cell membrane. The enzyme catalyses Na(+)(in) = Na(+)(out). With respect to regulation, inhibited by the diuretic drug amiloride. Could form pH-gated heterotrimeric sodium channels that act as postsynaptic excitatory sensors in the nervous system, generating rapid, transient inward currents that fully desensitize upon extracellular acidification. The protein is Degenerin-like protein asic-2 (asic-2) of Caenorhabditis elegans.